Consider the following 81-residue polypeptide: MSVLETIKVIWENISGYLQWIVPSLVILIIVVILASMKRGMTNFVLNIREIFSSKWWAFIFFILLFLFAIFWNDFRESIGM.

This is an uncharacterized protein from Mycoplasma (Bacteriophage L2).